We begin with the raw amino-acid sequence, 238 residues long: Modulator of macroautophagy TMEM150B (238 aa).

Residues 1–8 (MWNYLSLL) are Cytoplasmic-facing. The helical transmembrane segment at 9–29 (PVILFLWAIAGIWIVFAIAVV) threads the bilayer. An N-linked (GlcNAc...) asparagine glycan is attached at asparagine 30. At 30–51 (NGSVDLNEGFPFISICGSYAPQ) the chain is on the extracellular side. Residues 52 to 72 (SCIFGQVLNIGAALTVWICIV) traverse the membrane as a helical segment. The Cytoplasmic portion of the chain corresponds to 73-86 (RHHQLRDWGVKTWQ). The helical transmembrane segment at 87-107 (NQLILWSGILCALGTSIVGNF) threads the bilayer. Residues 108–116 (QDKNQKPTH) are Extracellular-facing. A helical membrane pass occupies residues 117 to 137 (LAGAFLAFILGNLYFWLQFFL). The Cytoplasmic portion of the chain corresponds to 138 to 156 (SWWVKGLPQPGPHWIKSLR). The helical transmembrane segment at 157–177 (LSLCSLSTILIVAMIVLHALH) threads the bilayer. The Extracellular portion of the chain corresponds to 178–186 (MRSASAICE). A helical membrane pass occupies residues 187-207 (WVVAMLLFMLFGFFAVDFSIL). Over 208-238 (RGCTLHLHPRLDSSLPQAPSGSPNIQMAQVL) the chain is Cytoplasmic.

Belongs to the DRAM/TMEM150 family.

Its subcellular location is the cell membrane. It localises to the endosome membrane. The protein resides in the cytoplasmic vesicle. It is found in the autophagosome membrane. Functionally, modulator of macroautophagy that causes accumulation of autophagosomes under basal conditions and enhances autophagic flux. Represses cell death and promotes long-term clonogenic survival of cells grown in the absence of glucose in a macroautophagy-independent manner. May have some role in extracellular matrix engulfment or growth factor receptor recycling, both of which can modulate cell survival. The chain is Modulator of macroautophagy TMEM150B from Mus musculus (Mouse).